A 262-amino-acid chain; its full sequence is VPS74-like protein DDB_G0288371 (262 aa).

It belongs to the GOLPH3/VPS74 family.

It localises to the golgi apparatus. It is found in the golgi stack membrane. Phosphatidylinositol-4-phosphate-binding protein that links Golgi membranes to the cytoskeleton and may participate in the tensile force required for vesicle budding from the Golgi. Thereby, may play a role in Golgi membrane trafficking. May also bind to the coatomer to regulate Golgi membrane trafficking. May play a role in anterograde transport from the Golgi to the plasma membrane and regulate secretion. May be involved in vacuolar protein sorting. In Dictyostelium discoideum (Social amoeba), this protein is VPS74-like protein DDB_G0288371.